Consider the following 368-residue polypeptide: MKTLNSTPRADGFHMPAEWAPQTQVWMVWPERPDNWRLGGKPAQAAHVTLAKAIARFEPVTVAVSAGQYENARRQLDQPNIRVVEISNDDAWVRDTGPTFVINDHGEVRGVDWGFNAWGGFDGGLYAPWNRDEELAAKVLEMERCQRYQTEGFVLEGGSIHVDGEGTVITTEECLLNRNRNPHLSREQIEAVLRDHLAVDTVVWLPDGLYNDETDGHVDNFCCYVRPGEVLLAWTDDSNDPNYARCHAAMDVLKNTRDAKGREFIVHKMPIPGPLFATAEECAGVDQVAGSQERDPSVRLAGSYVNFLIVNGGIIAPSFDDPADAEARAILARIFPDHEVVMIPGRELLLGGGNIHCLTQQQPAPVKR.

Cys357 serves as the catalytic Amidino-cysteine intermediate.

It belongs to the agmatine deiminase family. Homodimer.

The catalysed reaction is agmatine + H2O = N-carbamoylputrescine + NH4(+). It functions in the pathway amine and polyamine biosynthesis; putrescine biosynthesis via agmatine pathway; N-carbamoylputrescine from agmatine: step 1/1. Its function is as follows. Mediates the hydrolysis of agmatine into N-carbamoylputrescine in the arginine decarboxylase (ADC) pathway of putrescine biosynthesis, a basic polyamine. The chain is Agmatine deiminase from Pseudomonas putida (strain ATCC 47054 / DSM 6125 / CFBP 8728 / NCIMB 11950 / KT2440).